A 181-amino-acid chain; its full sequence is Adenylate kinase (181 aa).

Position 10–15 (10–15 (GAGKGT)) interacts with ATP. The NMP stretch occupies residues 30–59 (STGELFRRNIEKDTKLGHEAKKYLDAGDLV). Residues T31, R36, 57–59 (DLV), 85–88 (GYPR), and Q92 each bind AMP. The LID stretch occupies residues 126-132 (GRGRADD). R127 lines the ATP pocket. Residues R129 and R140 each coordinate AMP. G166 contacts ATP.

The protein belongs to the adenylate kinase family. Monomer.

It is found in the cytoplasm. It catalyses the reaction AMP + ATP = 2 ADP. It functions in the pathway purine metabolism; AMP biosynthesis via salvage pathway; AMP from ADP: step 1/1. Functionally, catalyzes the reversible transfer of the terminal phosphate group between ATP and AMP. Plays an important role in cellular energy homeostasis and in adenine nucleotide metabolism. This chain is Adenylate kinase, found in Mycobacterium leprae (strain Br4923).